The following is a 245-amino-acid chain: 5-oxoprolinase subunit A (245 aa).

This sequence belongs to the LamB/PxpA family. In terms of assembly, forms a complex composed of PxpA, PxpB and PxpC.

It carries out the reaction 5-oxo-L-proline + ATP + 2 H2O = L-glutamate + ADP + phosphate + H(+). In terms of biological role, catalyzes the cleavage of 5-oxoproline to form L-glutamate coupled to the hydrolysis of ATP to ADP and inorganic phosphate. The polypeptide is 5-oxoprolinase subunit A (Yersinia enterocolitica serotype O:8 / biotype 1B (strain NCTC 13174 / 8081)).